Here is a 1923-residue protein sequence, read N- to C-terminus: Callose synthase 5 (1923 aa).

Positions 1 to 10 (MAQSSTSHDS) are enriched in polar residues. Residues 1 to 22 (MAQSSTSHDSGPQGLMRRPSRS) are disordered. The Cytoplasmic portion of the chain corresponds to 1 to 481 (MAQSSTSHDS…ETRTFWHIYH (481 aa)). A helical membrane pass occupies residues 482–502 (SFDRLWTFYLLALQAMIILAF). Over 503 to 521 (ERVELREILRKDVLYALSS) the chain is Extracellular. A helical membrane pass occupies residues 522–542 (IFITAAFLRFLQSVLDVILNF). Over 543 to 559 (PGFHRWKFTDVLRNILK) the chain is Cytoplasmic. Residues 560–580 (IVVSLAWCVVLPLCYAQSVSF) traverse the membrane as a helical segment. The Extracellular portion of the chain corresponds to 581–601 (APGKLKQWLSFLPQVKGVPPL). The helical transmembrane segment at 602–622 (YIMAVALYLLPNVLAAIMFIF) threads the bilayer. Topologically, residues 623-658 (PMLRRWIENSDWHIFRLLLWWSQPRIYVGRGMHESQ) are cytoplasmic. Residues 659-679 (IALIKYTIFWLLLFCCKFAFS) traverse the membrane as a helical segment. Residues 680–719 (YFLQVKLLVKPTNAIMSIRHVKYKWHEFFPNAEHNYGAVV) lie on the Extracellular side of the membrane. A helical transmembrane segment spans residues 720–740 (SLWLPVILVYFMDTQIWYAIF). At 741–1486 (STICGGVIGA…FDFFRMMSCY (746 aa)) the chain is on the cytoplasmic side. The chain crosses the membrane as a helical span at residues 1487 to 1507 (FTTVGFYISSMIVVLTVYAFL). At 1508 to 1535 (YGRLYLSLSGVEEAIVKFAAAKGDSSLK) the chain is on the extracellular side. A helical membrane pass occupies residues 1536 to 1556 (AAMASQSVVQLGLLMTLPMVM). The Cytoplasmic portion of the chain corresponds to 1557 to 1566 (EIGLERGFRT). Residues 1567 to 1587 (ALSDLIIMQLQLAPVFFTFSL) form a helical membrane-spanning segment. Topologically, residues 1588 to 1630 (GTKVHYYGRTILHGGSKYRATGRGFVVKHEKFAENYRMYSRSH) are extracellular. The chain crosses the membrane as a helical span at residues 1631–1651 (FVKGMELMVLLICYRIYGKAA). The Cytoplasmic portion of the chain corresponds to 1652-1657 (EDSVGY). Residues 1658-1678 (ALVMGSTWFLVGSWLFAPFFF) traverse the membrane as a helical segment. Residues 1679-1732 (NPSGFEWQKIVDDWDDWNKWISSRGGIGVPANKSWESWWEEEQEHLLHSGFFGK) lie on the Extracellular side of the membrane. N-linked (GlcNAc...) asparagine glycosylation occurs at N1710. Residues 1733–1755 (FWEIFLSLRYFIYQYGIVYQLNL) form a helical membrane-spanning segment. The Cytoplasmic segment spans residues 1756–1766 (TKESRMGKQHS). Residues 1767–1787 (IIVYGLSWLVIVAVMIVLKIV) traverse the membrane as a helical segment. The Extracellular portion of the chain corresponds to 1788-1803 (SMGRKKFSADFQLMFR). A helical membrane pass occupies residues 1804–1824 (LLKLFLFIGSVVIVGMLFHFL). Position 1825 (K1825) is a topological domain, cytoplasmic. Residues 1826 to 1846 (LTVGDIMQSLLAFLPTGWALL) traverse the membrane as a helical segment. Residues 1847–1873 (QISQVARPLMKTVGMWGSVKALARGYE) are Extracellular-facing. A helical membrane pass occupies residues 1874–1894 (YIMGVVIFMPVTVLAWFPFVS). Topologically, residues 1895–1923 (EFQTRLLFNQAFSRGLQIQRILAGGKKQK) are cytoplasmic.

The protein belongs to the glycosyltransferase 48 family.

It is found in the cell membrane. It carries out the reaction [(1-&gt;3)-beta-D-glucosyl](n) + UDP-alpha-D-glucose = [(1-&gt;3)-beta-D-glucosyl](n+1) + UDP + H(+). Its function is as follows. Required for the formation of the callose wall separating the tetraspores (interstitial wall) and surrounding the pollen mother cells (peripheral wall). Required for exine formation on pollen wall. May be involved in callose synthesis during pollen tube growth. During plant growth and development, callose is found as a transitory component of the cell plate in dividing cells, is a major component of pollen mother cell walls and pollen tubes, and is found as a structural component of plasmodesmatal canals. In Arabidopsis thaliana (Mouse-ear cress), this protein is Callose synthase 5 (CALS5).